The chain runs to 504 residues: UDP-N-acetylmuramoylalanine--D-glutamate ligase (504 aa).

129–135 serves as a coordination point for ATP; that stretch reads GTNGKTT.

The protein belongs to the MurCDEF family.

It is found in the cytoplasm. It catalyses the reaction UDP-N-acetyl-alpha-D-muramoyl-L-alanine + D-glutamate + ATP = UDP-N-acetyl-alpha-D-muramoyl-L-alanyl-D-glutamate + ADP + phosphate + H(+). Its pathway is cell wall biogenesis; peptidoglycan biosynthesis. Cell wall formation. Catalyzes the addition of glutamate to the nucleotide precursor UDP-N-acetylmuramoyl-L-alanine (UMA). The sequence is that of UDP-N-acetylmuramoylalanine--D-glutamate ligase from Burkholderia mallei (strain NCTC 10247).